A 545-amino-acid chain; its full sequence is Chaperonin GroEL 1 (545 aa).

Residues 30–33, lysine 51, 87–91, glycine 415, and aspartate 495 each bind ATP; these read TLGP and DGTTT.

The protein belongs to the chaperonin (HSP60) family. Forms a cylinder of 14 subunits composed of two heptameric rings stacked back-to-back. Interacts with the co-chaperonin GroES.

It is found in the cytoplasm. The enzyme catalyses ATP + H2O + a folded polypeptide = ADP + phosphate + an unfolded polypeptide.. Functionally, together with its co-chaperonin GroES, plays an essential role in assisting protein folding. The GroEL-GroES system forms a nano-cage that allows encapsulation of the non-native substrate proteins and provides a physical environment optimized to promote and accelerate protein folding. The protein is Chaperonin GroEL 1 of Sinorhizobium medicae (strain WSM419) (Ensifer medicae).